A 180-amino-acid polypeptide reads, in one-letter code: Inner membrane-spanning protein YciB (180 aa).

The next 6 helical transmembrane spans lie at 4–24 (LLSE…GGGI), 25–45 (QHAT…CYVI), 49–69 (VSKL…ITLI), 76–96 (IKIK…MSGI), 118–138 (ITLS…NEVV), and 150–170 (FKVF…LPLL).

Belongs to the YciB family.

The protein localises to the cell inner membrane. Its function is as follows. Plays a role in cell envelope biogenesis, maintenance of cell envelope integrity and membrane homeostasis. The polypeptide is Inner membrane-spanning protein YciB (Rickettsia africae (strain ESF-5)).